A 463-amino-acid polypeptide reads, in one-letter code: Phosphomannomutase/phosphoglucomutase (463 aa).

Tyr-17 is an alpha-D-glucose 1-phosphate binding site. Tyr-17 is a binding site for alpha-D-mannose 1-phosphate. Ser-108 acts as the Non-phosphorylated intermediate in catalysis. 4 residues coordinate Mg(2+): Ser-108, Asp-242, Asp-244, and Asp-246. Residue Ser-108 is modified to Phosphoserine. Alpha-D-glucose 1-phosphate contacts are provided by residues Lys-285, His-308, 325–329 (EMSGH), and 421–425 (RASNT). Alpha-D-mannose 1-phosphate-binding positions include His-308, 325 to 329 (EMSGH), and 421 to 425 (RASNT).

This sequence belongs to the phosphohexose mutase family. Monomer. It depends on Mg(2+) as a cofactor.

It catalyses the reaction alpha-D-mannose 1-phosphate = D-mannose 6-phosphate. The catalysed reaction is alpha-D-glucose 1-phosphate = alpha-D-glucose 6-phosphate. It participates in nucleotide-sugar biosynthesis; GDP-alpha-D-mannose biosynthesis; alpha-D-mannose 1-phosphate from D-fructose 6-phosphate: step 2/2. Its pathway is bacterial outer membrane biogenesis; lipopolysaccharide biosynthesis. Functionally, highly reversible phosphoryltransferase. The phosphomannomutase activity produces a precursor for alginate polymerization, the alginate layer causes a mucoid phenotype and provides a protective barrier against host immune defenses and antibiotics. Also involved in core lipopolysaccaride (LPS) biosynthesis due to its phosphoglucomutase activity. Essential for rhamnolipid production, an exoproduct correlated with pathogenicity. Required for biofilm production. The reaction proceeds via 2 processive phosphoryl transferase reactions; first from enzyme-phospho-Ser-108 to the substrate (generating a bisphosphorylated substrate intermediate and a dephosphorylated enzyme), a 180 degree rotation of the intermediate (probably aided by movement of domain 4), and subsequent transfer of phosphate back to the enzyme. In Pseudomonas aeruginosa (strain UCBPP-PA14), this protein is Phosphomannomutase/phosphoglucomutase (algC).